The following is a 261-amino-acid chain: Small ribosomal subunit protein uS2 (261 aa).

Residue serine 2 is modified to N-acetylserine. The tract at residues 212–261 is disordered; it reads QNAAEEAKAEETEEAPAAEAETEWTGETDDVDWADSGATPAAEDAAASNW. Residues 222-244 show a composition bias toward acidic residues; sequence ETEEAPAAEAETEWTGETDDVDW.

This sequence belongs to the universal ribosomal protein uS2 family. Component of the small ribosomal subunit. Mature ribosomes consist of a small (40S) and a large (60S) subunit. The 40S subunit contains about 33 different proteins and 1 molecule of RNA (18S). The 60S subunit contains about 49 different proteins and 3 molecules of RNA (25S, 5.8S and 5S). Interacts with RPS21.

Its subcellular location is the cytoplasm. Functionally, required for the assembly and/or stability of the 40S ribosomal subunit. Required for the processing of the 20S rRNA-precursor to mature 18S rRNA in a late step of the maturation of 40S ribosomal subunits. In Candida tropicalis (Yeast), this protein is Small ribosomal subunit protein uS2.